Consider the following 47-residue polypeptide: Delta-actitoxin-Ael1b (47 aa).

3 disulfides stabilise this stretch: Cys-4–Cys-44, Cys-6–Cys-34, and Cys-27–Cys-45.

It belongs to the sea anemone sodium channel inhibitory toxin family. Type I subfamily.

Its subcellular location is the secreted. It localises to the nematocyst. Produces a positive inotropic effect in mammalian heart muscle. Modifies current passing through the fast sodium channel (Nav) in neuroblastoma cells, leading to delayed and incomplete inactivation. Paralyzes the shore crab (C.maenas) by tetanic contractions after intramuscular injection. This chain is Delta-actitoxin-Ael1b, found in Anthopleura elegantissima (Green aggregating anemone).